A 499-amino-acid polypeptide reads, in one-letter code: Neuropeptide CCHamide-1 receptor (499 aa).

The Extracellular portion of the chain corresponds to 1-85; sequence MIANLVSMET…GRRPETYIVP (85 aa). N-linked (GlcNAc...) asparagine glycans are attached at residues Asn33 and Asn61. Residues 86 to 106 form a helical membrane-spanning segment; the sequence is ILFALIFVVGVLGNGTLIVVF. Residues 107–117 are Cytoplasmic-facing; the sequence is LSVRQMRNVPN. The helical transmembrane segment at 118-138 threads the bilayer; sequence TYILSLALADLLVIITTVPLA. At 139-162 the chain is on the extracellular side; sequence STVYTVEYWPYGSFLCSLSEFMKD. A disulfide bond links Cys154 and Cys240. A helical membrane pass occupies residues 163 to 183; sequence VSIGVSVFTLTALSGDRYFAI. The Cytoplasmic portion of the chain corresponds to 184–203; sequence VDPLRKFHAHGGGRRATRMT. Residues 204 to 224 form a helical membrane-spanning segment; that stretch reads LATAVSIWLLAILCGLPALIG. At 225–259 the chain is on the extracellular side; it reads SNLKHLGINEKSIVICYPYPEEWGINYAKSMVLLH. Residues 260–280 form a helical membrane-spanning segment; it reads FLVYYAIPLVVIAVFYVLIAL. Residues 281 to 309 lie on the Cytoplasmic side of the membrane; it reads HLMYSASVPGEIQGAVRQVRARRKVAVTV. Residues 310 to 330 traverse the membrane as a helical segment; sequence LAFVVIFGICFLPYHVFFLWF. The Extracellular portion of the chain corresponds to 331–348; it reads YFWPTAQDDYNAFWHVLR. The chain crosses the membrane as a helical span at residues 349-369; sequence IVAYCMSFANSCANPVALYFV. Residues 370-499 are Cytoplasmic-facing; the sequence is SGAFRKHFNR…PAKFQESLLN (130 aa).

The protein belongs to the G-protein coupled receptor 1 family. As to expression, low levels in larval brain and gut with higher levels in adult brain and gut. In the brain expression is widely distributed, including strong expression in the mushroom bodies. Expressed weakly in s-LNv (small ventral lateral neurons) and strongly in l-LNv (large ventral lateral neurons), but not in other clock neurons.

Its subcellular location is the cell membrane. Receptor for the neuropeptide CCHamide-1. Plays a role in the modulation of starvation-induced olfactory behavior where starved flies show increased responsiveness to food odorants, repellants and pheromones. Contributes to regulation of sleep latency (the time required to fall asleep), amount of sleep and depth of sleep (arousability). Involved in modulation of PDP1 and PDF levels in s-LNv (small ventral lateral neurons) clock neurons in response to CCHa1 released by DN1a (anterior dorsal neurons 1) clock neurons, to regulate morning activity. In a subset of dopaminergic cells in the protocerebral anterior medial (PAM) cluster involved in suppressing arousability in response to CCHa1 secreted by gut enteroendocrine cells. This is Neuropeptide CCHamide-1 receptor from Drosophila melanogaster (Fruit fly).